Reading from the N-terminus, the 291-residue chain is Potassium-transporting ATPase subunit beta (291 aa).

Residues 1-36 are Cytoplasmic-facing; the sequence is MAALQEKKSCSQRMEEFRHYCWNPDTGQMLGRTLSR. Residues 37–57 form a helical; Signal-anchor for type II membrane protein membrane-spanning segment; the sequence is WVWISLYYVAFYVVMTGLFAL. The Extracellular segment spans residues 58-291; the sequence is CIYVLMQTID…KVEFKLKIQK (234 aa). N99, N103, N130, N146, and N161 each carry an N-linked (GlcNAc...) asparagine glycan. C131 and C152 are joined by a disulfide. Residues C162 and C178 are joined by a disulfide bond. Residues N193 and N222 are each glycosylated (N-linked (GlcNAc...) asparagine). An immunoglobulin-like region spans residues 194–291; the sequence is STPPRVDCTF…KVEFKLKIQK (98 aa). C201 and C263 form a disulfide bridge.

This sequence belongs to the X(+)/potassium ATPases subunit beta family. As to quaternary structure, the ATPase pump is composed of two subunits: alpha (catalytic) and beta (regulatory). Interacts with alpha subunit ATP12A; this interaction is required for the formation of a functionally active pump and targeting at the plasma membrane. Interacts (via N-terminus) with alpha subunit ATP4A (via the P-domain). In terms of processing, N-glycosylation is necessary for assembly and functional expression of the pump at the plasma membrane.

The protein localises to the apical cell membrane. It localises to the cell membrane. Its function is as follows. The beta subunit of the gastric H(+)/K(+) ATPase pump which transports H(+) ions in exchange for K(+) ions across the apical membrane of parietal cells. Plays a structural and regulatory role in the assembly and membrane targeting of a functionally active pump. Within a transport cycle, the transfer of a H(+) ion across the membrane is coupled to ATP hydrolysis and is associated with a transient phosphorylation of the alpha subunit that shifts the pump conformation from inward-facing (E1) to outward-facing state (E2). Interacts with the phosphorylation domain of the alpha subunit and functions as a ratchet, stabilizing the lumenal-open E2 conformation and preventing the reverse reaction of the transport cycle. The protein is Potassium-transporting ATPase subunit beta (ATP4B) of Oryctolagus cuniculus (Rabbit).